We begin with the raw amino-acid sequence, 190 residues long: Putative resolvase R80 (190 aa).

A DNA-binding region (H-T-H motif) is located at residues 11 to 30 (SSVLGVHQRTLYQWDKKGWI). A Resolvase/invertase-type recombinase catalytic domain is found at 61 to 190 (LSICYVRVSS…RNGSRKYSNK (130 aa)). Residues 67 to 92 (RVSSNSQKDDLERQIKFMKKKYPNHT) adopt a coiled-coil conformation. Serine 69 (O-(5'-phospho-DNA)-serine intermediate) is an active-site residue.

It belongs to the site-specific recombinase resolvase family.

Its function is as follows. Resolvase catalyzes the resolution (a site-specific recombination) of the cointegrated replicon to yield the final transposition products. The sequence is that of Putative resolvase R80 from Acanthamoeba polyphaga mimivirus (APMV).